Here is a 382-residue protein sequence, read N- to C-terminus: Na(+)/H(+) antiporter NhaA (382 aa).

11 helical membrane-spanning segments follow: residues 13 to 33, 58 to 78, 94 to 114, 124 to 144, 153 to 173, 179 to 199, 204 to 224, 256 to 276, 285 to 305, 325 to 345, and 357 to 377; these read IGGI…NSPF, LLLW…GLEI, LVPA…FIFF, GWAI…SLLG, ILLT…IALF, SLLS…LNYF, ISVF…SGVH, VVFL…FVGL, VVLG…FLSL, VYGI…IGSL, and MVKI…FLVL.

This sequence belongs to the NhaA Na(+)/H(+) (TC 2.A.33) antiporter family.

The protein resides in the cell inner membrane. The catalysed reaction is Na(+)(in) + 2 H(+)(out) = Na(+)(out) + 2 H(+)(in). Its function is as follows. Na(+)/H(+) antiporter that extrudes sodium in exchange for external protons. The chain is Na(+)/H(+) antiporter NhaA from Legionella pneumophila (strain Paris).